The chain runs to 197 residues: 5'-deoxynucleotidase plu3092 (197 aa).

Substrate-binding positions include 16 to 17 (RW) and H31. The 113-residue stretch at 28–140 (VSEHSLQVAF…IKQADSLCAY (113 aa)) folds into the HD domain. H31, H66, and D67 together coordinate a divalent metal cation. Residues D67, 75-78 (DLPT), and D135 each bind substrate. Residue D135 coordinates a divalent metal cation.

It belongs to the 5DNU family. In terms of assembly, homodimer. The cofactor is a divalent metal cation.

Its subcellular location is the cytoplasm. It catalyses the reaction a 2'-deoxyribonucleoside 5'-phosphate + H2O = a 2'-deoxyribonucleoside + phosphate. In terms of biological role, catalyzes the strictly specific dephosphorylation of 2'-deoxyribonucleoside 5'-monophosphates. In Photorhabdus laumondii subsp. laumondii (strain DSM 15139 / CIP 105565 / TT01) (Photorhabdus luminescens subsp. laumondii), this protein is 5'-deoxynucleotidase plu3092.